Reading from the N-terminus, the 901-residue chain is HTH-type transcriptional regulator MalT (901 aa).

39–46 contributes to the ATP binding site; that stretch reads SPAGYGKT. In terms of domain architecture, HTH luxR-type spans 829–894; that stretch reads ELIRTSPLTQ…DAVQHAQQLL (66 aa). A DNA-binding region (H-T-H motif) is located at residues 853–872; it reads NEQIAGELAVAATTIKTHIR.

This sequence belongs to the MalT family. As to quaternary structure, monomer in solution. Oligomerizes to an active state in the presence of the positive effectors ATP and maltotriose.

Activated by ATP and maltotriose, which are both required for DNA binding. Positively regulates the transcription of the maltose regulon whose gene products are responsible for uptake and catabolism of malto-oligosaccharides. Specifically binds to the promoter region of its target genes, recognizing a short DNA motif called the MalT box. This Salmonella heidelberg (strain SL476) protein is HTH-type transcriptional regulator MalT.